A 427-amino-acid polypeptide reads, in one-letter code: Glutamate-1-semialdehyde 2,1-aminomutase (427 aa).

Lys-265 carries the N6-(pyridoxal phosphate)lysine modification.

The protein belongs to the class-III pyridoxal-phosphate-dependent aminotransferase family. HemL subfamily. In terms of assembly, homodimer. Pyridoxal 5'-phosphate is required as a cofactor.

The protein resides in the cytoplasm. The catalysed reaction is (S)-4-amino-5-oxopentanoate = 5-aminolevulinate. It participates in porphyrin-containing compound metabolism; protoporphyrin-IX biosynthesis; 5-aminolevulinate from L-glutamyl-tRNA(Glu): step 2/2. The chain is Glutamate-1-semialdehyde 2,1-aminomutase from Burkholderia cenocepacia (strain ATCC BAA-245 / DSM 16553 / LMG 16656 / NCTC 13227 / J2315 / CF5610) (Burkholderia cepacia (strain J2315)).